The chain runs to 424 residues: Enolase (424 aa).

Gln164 lines the (2R)-2-phosphoglycerate pocket. Catalysis depends on Glu206, which acts as the Proton donor. 3 residues coordinate Mg(2+): Asp243, Glu284, and Asp311. Positions 336, 365, 366, and 387 each coordinate (2R)-2-phosphoglycerate. Lys336 acts as the Proton acceptor in catalysis.

The protein belongs to the enolase family. Mg(2+) is required as a cofactor.

It localises to the cytoplasm. The protein localises to the secreted. It is found in the cell surface. The catalysed reaction is (2R)-2-phosphoglycerate = phosphoenolpyruvate + H2O. Its pathway is carbohydrate degradation; glycolysis; pyruvate from D-glyceraldehyde 3-phosphate: step 4/5. Functionally, catalyzes the reversible conversion of 2-phosphoglycerate (2-PG) into phosphoenolpyruvate (PEP). It is essential for the degradation of carbohydrates via glycolysis. The sequence is that of Enolase from Wolbachia sp. subsp. Drosophila simulans (strain wRi).